We begin with the raw amino-acid sequence, 134 residues long: MRGVFFVAVAVAIFARSSAEAKLLSEAAPGLAADAVISGESRERFLRVADPEDDDLAAPADDGKTEERAPKFKSLNEIHKKLDEEDMVHVSKILGNMGAIHADNIAKARAALKAAHESGATTANQLVAGLAKPV.

The N-terminal stretch at 1–21 (MRGVFFVAVAVAIFARSSAEA) is a signal peptide. Positions 44–68 (RFLRVADPEDDDLAAPADDGKTEER) match the RxLR-dEER motif. The tract at residues 49 to 70 (ADPEDDDLAAPADDGKTEERAP) is disordered. A compositionally biased stretch (basic and acidic residues) spans 61–70 (DDGKTEERAP).

Belongs to the RxLR effector family. In terms of assembly, interacts with host 1-aminocyclopropane-1-carboxylate synthases ACS1, ACS2, ACS3, ACS10 and ACS12.

Its subcellular location is the secreted. The protein resides in the host cytoplasm. The protein localises to the host nucleus. Functionally, effector that suppresses plant defense responses during the early stages of pathogen infection. Suppresses cell death induced by effectors and PAMPs in plant hosts. Is able to induced cell death in tomato, tobacco, eggplant, and potato, but not in A.thaliana. Interacts with and destabilizes host 1-aminocyclopropane-1-carboxylate synthases. By suppressing type2 ACS-catalyzed ethylene biosynthesis, Avh238 facilitates Phytophthora infection. This chain is RxLR effector protein Avh238 (Avh238), found in Phytophthora sojae (strain P6497) (Soybean stem and root rot agent).